The primary structure comprises 256 residues: Deoxyribose-phosphate aldolase (256 aa).

The Proton donor/acceptor role is filled by aspartate 102. Residue lysine 165 is the Schiff-base intermediate with acetaldehyde of the active site. Lysine 197 (proton donor/acceptor) is an active-site residue.

This sequence belongs to the DeoC/FbaB aldolase family. DeoC type 2 subfamily.

Its subcellular location is the cytoplasm. It carries out the reaction 2-deoxy-D-ribose 5-phosphate = D-glyceraldehyde 3-phosphate + acetaldehyde. The protein operates within carbohydrate degradation; 2-deoxy-D-ribose 1-phosphate degradation; D-glyceraldehyde 3-phosphate and acetaldehyde from 2-deoxy-alpha-D-ribose 1-phosphate: step 2/2. Its function is as follows. Catalyzes a reversible aldol reaction between acetaldehyde and D-glyceraldehyde 3-phosphate to generate 2-deoxy-D-ribose 5-phosphate. The sequence is that of Deoxyribose-phosphate aldolase from Shewanella oneidensis (strain ATCC 700550 / JCM 31522 / CIP 106686 / LMG 19005 / NCIMB 14063 / MR-1).